An 81-amino-acid polypeptide reads, in one-letter code: ATP synthase subunit c (81 aa).

2 helical membrane passes run 6-26 (AAAS…GPGF) and 57-77 (LAFM…LLFA).

This sequence belongs to the ATPase C chain family. As to quaternary structure, F-type ATPases have 2 components, F(1) - the catalytic core - and F(0) - the membrane proton channel. F(1) has five subunits: alpha(3), beta(3), gamma(1), delta(1), epsilon(1). F(0) has four main subunits: a(1), b(1), b'(1) and c(10-14). The alpha and beta chains form an alternating ring which encloses part of the gamma chain. F(1) is attached to F(0) by a central stalk formed by the gamma and epsilon chains, while a peripheral stalk is formed by the delta, b and b' chains.

The protein resides in the cellular thylakoid membrane. F(1)F(0) ATP synthase produces ATP from ADP in the presence of a proton or sodium gradient. F-type ATPases consist of two structural domains, F(1) containing the extramembraneous catalytic core and F(0) containing the membrane proton channel, linked together by a central stalk and a peripheral stalk. During catalysis, ATP synthesis in the catalytic domain of F(1) is coupled via a rotary mechanism of the central stalk subunits to proton translocation. In terms of biological role, key component of the F(0) channel; it plays a direct role in translocation across the membrane. A homomeric c-ring of between 10-14 subunits forms the central stalk rotor element with the F(1) delta and epsilon subunits. The sequence is that of ATP synthase subunit c from Rippkaea orientalis (strain PCC 8801 / RF-1) (Cyanothece sp. (strain PCC 8801)).